Consider the following 593-residue polypeptide: MYGNQQNNSNPYQMSYYRMNNGQGQGTNRWPQQLSHQEMLAGHSQQILNNNKPAGNQSKPPIVMASNNVFSIGPYRQRKDSSRISVLQKYEIIGYIAAGTYGKVYKAKARDYQNGMNRDNVIILDSPDSVSADSNLDINSINRSTRQQEANDNLTTMDFRKPSHKRFTPPNNSNSTQIRSNSGSETNVRINSSSITNNSRKPSQIQFYAIKKFKTEREGVEHYTGISQSACREMSLCRELDNNHLTKLVEIFLEKKSIYMVSEFAEHDLLQIIHFHSHPEKRLIPPRMLKSIMWQILDGVSYLHQNWILHRDLKPANIMVTVDGCVKIGDLGLARKFNNMVQTLYTGDKVIVTIWYRAPELILGARHYTPAIDLWAVGCIFAELIGLRPIFKGEEAKMESKKSVLFQANQFQKILEVMGSPDHKIWPNIDSYPEYLQLAKMPKYRDNLTAWYQTAGGKDKTALDILYRLLQYDPIKRIDAIDALDHVYFTNGDPPVCENVFEGLNYKYPPRRIHTNDNDITNVGNDNNQANHSQKQPMHGNNNNKNGNMNGLGVNKRILAAAAAAAAAAAVSGNGNNPTSNTATGGSARKKRK.

Residues 90 to 489 enclose the Protein kinase domain; sequence YEIIGYIAAG…AIDALDHVYF (400 aa). Residue 96–104 coordinates ATP; the sequence is IAAGTYGKV. The segment at 161–199 is disordered; it reads KPSHKRFTPPNNSNSTQIRSNSGSETNVRINSSSITNNS. Positions 169 to 185 are enriched in polar residues; sequence PPNNSNSTQIRSNSGSE. Low complexity predominate over residues 186 to 199; the sequence is TNVRINSSSITNNS. Lys-211 serves as a coordination point for ATP. Asp-312 functions as the Proton acceptor in the catalytic mechanism. Disordered regions lie at residues 517-551 and 569-593; these read DNDITNVGNDNNQANHSQKQPMHGNNNNKNGNMNG and AAVSGNGNNPTSNTATGGSARKKRK. Residues 518 to 536 are compositionally biased toward polar residues; sequence NDITNVGNDNNQANHSQKQ. The segment covering 540-551 has biased composition (low complexity); it reads GNNNNKNGNMNG. Residues 573–585 are compositionally biased toward polar residues; the sequence is GNGNNPTSNTATG.

Belongs to the protein kinase superfamily. CMGC Ser/Thr protein kinase family. CDC2/CDKX subfamily. Component of the SRB8-11 complex, a regulatory module of the Mediator complex. Requires Mg(2+) as cofactor.

Its subcellular location is the nucleus. The enzyme catalyses L-seryl-[protein] + ATP = O-phospho-L-seryl-[protein] + ADP + H(+). It carries out the reaction L-threonyl-[protein] + ATP = O-phospho-L-threonyl-[protein] + ADP + H(+). It catalyses the reaction [DNA-directed RNA polymerase] + ATP = phospho-[DNA-directed RNA polymerase] + ADP + H(+). In terms of biological role, component of the SRB8-11 complex. The SRB8-11 complex is a regulatory module of the Mediator complex which is itself involved in regulation of basal and activated RNA polymerase II-dependent transcription. The SRB8-11 complex may be involved in the transcriptional repression of a subset of genes regulated by Mediator. It may inhibit the association of the Mediator complex with RNA polymerase II to form the holoenzyme complex. The SRB8-11 complex phosphorylates the C-terminal domain (CTD) of the largest subunit of RNA polymerase II. The chain is Serine/threonine-protein kinase SSN3 (SSN3) from Kluyveromyces lactis (strain ATCC 8585 / CBS 2359 / DSM 70799 / NBRC 1267 / NRRL Y-1140 / WM37) (Yeast).